Consider the following 559-residue polypeptide: Glucose-6-phosphate isomerase (559 aa).

Glutamate 352 serves as the catalytic Proton donor. Residues histidine 383 and lysine 511 contribute to the active site.

This sequence belongs to the GPI family.

The protein localises to the cytoplasm. The catalysed reaction is alpha-D-glucose 6-phosphate = beta-D-fructose 6-phosphate. It functions in the pathway carbohydrate biosynthesis; gluconeogenesis. Its pathway is carbohydrate degradation; glycolysis; D-glyceraldehyde 3-phosphate and glycerone phosphate from D-glucose: step 2/4. Catalyzes the reversible isomerization of glucose-6-phosphate to fructose-6-phosphate. The chain is Glucose-6-phosphate isomerase from Chlorobium phaeobacteroides (strain DSM 266 / SMG 266 / 2430).